The chain runs to 345 residues: Anthranilate phosphoribosyltransferase (345 aa).

5-phospho-alpha-D-ribose 1-diphosphate-binding positions include Gly84, 87–88 (GD), Thr92, 94–97 (NIST), 112–120 (KHGGRSVSS), and Ser124. Gly84 serves as a coordination point for anthranilate. Ser96 contributes to the Mg(2+) binding site. An anthranilate-binding site is contributed by Arg170. The Mg(2+) site is built by Asp229 and Glu230.

It belongs to the anthranilate phosphoribosyltransferase family. As to quaternary structure, homodimer. It depends on Mg(2+) as a cofactor.

The enzyme catalyses N-(5-phospho-beta-D-ribosyl)anthranilate + diphosphate = 5-phospho-alpha-D-ribose 1-diphosphate + anthranilate. It participates in amino-acid biosynthesis; L-tryptophan biosynthesis; L-tryptophan from chorismate: step 2/5. Its function is as follows. Catalyzes the transfer of the phosphoribosyl group of 5-phosphorylribose-1-pyrophosphate (PRPP) to anthranilate to yield N-(5'-phosphoribosyl)-anthranilate (PRA). The chain is Anthranilate phosphoribosyltransferase from Leptothrix cholodnii (strain ATCC 51168 / LMG 8142 / SP-6) (Leptothrix discophora (strain SP-6)).